The primary structure comprises 61 residues: Large ribosomal subunit protein uL30 (61 aa).

It belongs to the universal ribosomal protein uL30 family. As to quaternary structure, part of the 50S ribosomal subunit.

The protein is Large ribosomal subunit protein uL30 of Saccharophagus degradans (strain 2-40 / ATCC 43961 / DSM 17024).